The chain runs to 387 residues: Alpha-sarcoglycan (387 aa).

The first 23 residues, 1-23 (MAETLFWTPLLVVLLAGLGDTEA), serve as a signal peptide directing secretion. Over 24–290 (QQTTLHPLVG…APDRDFLVDA (267 aa)) the chain is Extracellular. Residues N174 and N246 are each glycosylated (N-linked (GlcNAc...) asparagine). A helical membrane pass occupies residues 291–311 (LVTLLVPLLVALLLTLLLAYV). Topologically, residues 312–387 (MCCRREGRLK…AQVPLILDQH (76 aa)) are cytoplasmic. S377 carries the post-translational modification Phosphoserine.

The protein belongs to the sarcoglycan alpha/epsilon family. Interacts with the syntrophin SNTA1. Cross-link to form 2 major subcomplexes: one consisting of SGCB, SGCD and SGCG and the other consisting of SGCB and SGCD. The association between SGCB and SGCG is particularly strong while SGCA is loosely associated with the other sarcoglycans. Most strongly expressed in skeletal muscle. Also expressed in cardiac muscle and, at much lower levels, in lung. In the fetus, most abundant in cardiac muscle and, at lower levels, in lung. Also detected in liver and kidney. Not expressed in brain.

It localises to the cell membrane. Its subcellular location is the sarcolemma. It is found in the cytoplasm. The protein resides in the cytoskeleton. Functionally, component of the sarcoglycan complex, a subcomplex of the dystrophin-glycoprotein complex which forms a link between the F-actin cytoskeleton and the extracellular matrix. This Homo sapiens (Human) protein is Alpha-sarcoglycan (SGCA).